A 103-amino-acid polypeptide reads, in one-letter code: Urease subunit beta (103 aa).

Belongs to the urease beta subunit family. Heterotrimer of UreA (gamma), UreB (beta) and UreC (alpha) subunits. Three heterotrimers associate to form the active enzyme.

The protein resides in the cytoplasm. The catalysed reaction is urea + 2 H2O + H(+) = hydrogencarbonate + 2 NH4(+). The protein operates within nitrogen metabolism; urea degradation; CO(2) and NH(3) from urea (urease route): step 1/1. In terms of biological role, ureolysis may allow urea to be employed as a nitrogen source for growth and produces ammonia which may protect from killing at low pH. In Streptococcus salivarius (strain 57.I), this protein is Urease subunit beta.